Consider the following 410-residue polypeptide: Mating-type locus allele B1 protein (410 aa).

Residues 1–110 (MSSDPNFSLI…FNVVSPDVGC (110 aa)) are variable domain between B alleles. The homeobox; TALE-type DNA-binding region spans 107–184 (DVGCRNLSED…NARRRSGWSH (78 aa)). The tract at residues 111–410 (RNLSEDLPAY…PFLCLSVAFV (300 aa)) is highly conserved between B alleles. 3 disordered regions span residues 202–239 (RAKL…PLTP), 278–335 (TPKP…TPEL), and 374–395 (ARGN…PDEV). Over residues 205–233 (LSSSNQSTPPSSTSDSLSNNLDDVLSDNL) the composition is skewed to low complexity. The short motif at 276 to 308 (KKTPKPGMPRPVTTVAKRHPARKTKPAAKPKSR) is the Nuclear localization signal element. Over residues 291–307 (AKRHPARKTKPAAKPKS) the composition is skewed to basic residues. The span at 312-335 (PRASTTPSIDSTLDSSKLESTPEL) shows a compositional bias: polar residues. The segment at 333–410 (PELSMCSTAD…PFLCLSVAFV (78 aa)) is not essential for B1 function. Residues 375-388 (RGNRKVKALPKRAG) show a composition bias toward basic residues.

This sequence belongs to the TALE/M-ATYP homeobox family.

It is found in the nucleus. Its function is as follows. The B locus has at least 25 alleles, and any combination of two different B alleles yields a multimeric regulatory protein, that activates genes responsible for the pathogenicity and for the sexual development of the fungus within the corn plant. The sequence is that of Mating-type locus allele B1 protein from Mycosarcoma maydis (Corn smut fungus).